The primary structure comprises 115 residues: MSAALLLATLLMTGLGQVAQKLTVEHWRLVAADGWAARLRSPWPWLALLALGLGLACWLLLLQRVEVGSAYPMLALNFVLVTLVARFVFDEPVDRRHLAGLLLIVAGVALLGRQA.

3 helical membrane passes run 42–62, 65–85, and 93–112; these read PWPW…LLLL, VEVG…TLVA, and VDRR…ALLG. In terms of domain architecture, EamA spans 46–113; sequence LALLALGLGL…IVAGVALLGR (68 aa).

The protein belongs to the ArnE family. Heterodimer of ArnE and ArnF.

It is found in the cell inner membrane. The protein operates within bacterial outer membrane biogenesis; lipopolysaccharide biosynthesis. Its function is as follows. Translocates 4-amino-4-deoxy-L-arabinose-phosphoundecaprenol (alpha-L-Ara4N-phosphoundecaprenol) from the cytoplasmic to the periplasmic side of the inner membrane. In Pseudomonas paraeruginosa (strain DSM 24068 / PA7) (Pseudomonas aeruginosa (strain PA7)), this protein is Probable 4-amino-4-deoxy-L-arabinose-phosphoundecaprenol flippase subunit ArnE.